A 263-amino-acid chain; its full sequence is Endonuclease 8 (263 aa).

The active-site Schiff-base intermediate with DNA is Pro2. Glu3 functions as the Proton donor in the catalytic mechanism. Lys53 acts as the Proton donor; for beta-elimination activity in catalysis. Gln70, Arg125, and Asn169 together coordinate DNA. The FPG-type zinc finger occupies 229–263 (KVFHRDGEACERCGGIIEKTTLSSRPFYWCAHCQK). Arg253 (proton donor; for delta-elimination activity) is an active-site residue.

This sequence belongs to the FPG family. The cofactor is Zn(2+).

The catalysed reaction is 2'-deoxyribonucleotide-(2'-deoxyribose 5'-phosphate)-2'-deoxyribonucleotide-DNA = a 3'-end 2'-deoxyribonucleotide-(2,3-dehydro-2,3-deoxyribose 5'-phosphate)-DNA + a 5'-end 5'-phospho-2'-deoxyribonucleoside-DNA + H(+). Functionally, involved in base excision repair of DNA damaged by oxidation or by mutagenic agents. Acts as a DNA glycosylase that recognizes and removes damaged bases. Has a preference for oxidized pyrimidines, such as thymine glycol, 5,6-dihydrouracil and 5,6-dihydrothymine. Has AP (apurinic/apyrimidinic) lyase activity and introduces nicks in the DNA strand. Cleaves the DNA backbone by beta-delta elimination to generate a single-strand break at the site of the removed base with both 3'- and 5'-phosphates. This chain is Endonuclease 8, found in Salmonella typhi.